Here is a 1170-residue protein sequence, read N- to C-terminus: Putative DNA topoisomerase 2, mitochondrial (1170 aa).

Residues N106, N135, 163-165, 176-183, and 396-398 contribute to the ATP site; these read SSN, GRNGYGAK, and QTK. One can recognise a Toprim domain in the interval 475 to 590; that stretch reads CTLILTEGDS…SLVHTDGFIQ (116 aa). The Mg(2+) site is built by E481, D559, and D561. The 436-residue stretch at 722 to 1157 folds into the Topo IIA-type catalytic domain; the sequence is IPSLIDGLKP…DWKSVWRSEL (436 aa). The O-(5'-phospho-DNA)-tyrosine intermediate role is filled by Y813.

It belongs to the type II topoisomerase family. As to quaternary structure, homodimer. It depends on Mg(2+) as a cofactor. Mn(2+) serves as cofactor. Ca(2+) is required as a cofactor.

The protein localises to the mitochondrion. It carries out the reaction ATP-dependent breakage, passage and rejoining of double-stranded DNA.. In terms of biological role, control of topological states of DNA by transient breakage and subsequent rejoining of DNA strands. Topoisomerase II makes double-strand breaks. The protein is Putative DNA topoisomerase 2, mitochondrial of Caenorhabditis elegans.